A 283-amino-acid chain; its full sequence is Bifunctional protein FolD 2 (283 aa).

NADP(+) is bound by residues 165–167 (GRG), Thr192, and Val233.

The protein belongs to the tetrahydrofolate dehydrogenase/cyclohydrolase family. As to quaternary structure, homodimer.

The catalysed reaction is (6R)-5,10-methylene-5,6,7,8-tetrahydrofolate + NADP(+) = (6R)-5,10-methenyltetrahydrofolate + NADPH. It carries out the reaction (6R)-5,10-methenyltetrahydrofolate + H2O = (6R)-10-formyltetrahydrofolate + H(+). Its pathway is one-carbon metabolism; tetrahydrofolate interconversion. Catalyzes the oxidation of 5,10-methylenetetrahydrofolate to 5,10-methenyltetrahydrofolate and then the hydrolysis of 5,10-methenyltetrahydrofolate to 10-formyltetrahydrofolate. The polypeptide is Bifunctional protein FolD 2 (Nocardioides sp. (strain ATCC BAA-499 / JS614)).